Here is a 77-residue protein sequence, read N- to C-terminus: Antitoxin VapB2 (77 aa).

The SpoVT-AbrB domain maps to 4–46; sequence ASVFMTNRSQAVRLPAEVRFSEEIKKLSVRVSGSDRILSPLNQ.

It belongs to the VapB family. Probably forms a complex with cognate toxin VapC2.

Functionally, antitoxin component of a type II toxin-antitoxin (TA) system. Neutralizes the effect of cognate toxin VapC2 but not non-cognate toxin VapC2. The protein is Antitoxin VapB2 of Haemophilus influenzae (strain 86-028NP).